Here is a 156-residue protein sequence, read N- to C-terminus: MKLFILAVGHKMPGWIASGFDEYTKRMPPELRIELREIKPELRSGGRSAESVMAAERQKIEAALPKGARLVALDERGRDWTTMQLAQALPGWQQDGRDVAFVIGGADGLDPELKARADVLLRISSMTLPHGMVRVLLAEQLYRAWSITQNHPYHRA.

S-adenosyl-L-methionine contacts are provided by residues L73, G104, and 123–128 (ISSMTL).

Belongs to the RNA methyltransferase RlmH family. As to quaternary structure, homodimer.

Its subcellular location is the cytoplasm. It carries out the reaction pseudouridine(1915) in 23S rRNA + S-adenosyl-L-methionine = N(3)-methylpseudouridine(1915) in 23S rRNA + S-adenosyl-L-homocysteine + H(+). Functionally, specifically methylates the pseudouridine at position 1915 (m3Psi1915) in 23S rRNA. The chain is Ribosomal RNA large subunit methyltransferase H from Burkholderia cenocepacia (strain ATCC BAA-245 / DSM 16553 / LMG 16656 / NCTC 13227 / J2315 / CF5610) (Burkholderia cepacia (strain J2315)).